The following is a 378-amino-acid chain: O-glycoside alpha-1,2-mannosyltransferase homolog 3 (378 aa).

Residues 1-6 (MGIPKS) are Cytoplasmic-facing. The helical; Signal-anchor for type II membrane protein transmembrane segment at 7–24 (SIYFCILLFCIISFYLQS) threads the bilayer. The Lumenal segment spans residues 25–378 (SKDGPKELKV…AIKWLENINS (354 aa)). Residue Glu276 is the Nucleophile of the active site.

Belongs to the glycosyltransferase 15 family.

It is found in the endoplasmic reticulum membrane. The protein localises to the golgi apparatus membrane. In terms of biological role, probable mannosyltransferase involved in O-glycosylation of cell wall and secreted proteins. The chain is O-glycoside alpha-1,2-mannosyltransferase homolog 3 (omh3) from Schizosaccharomyces pombe (strain 972 / ATCC 24843) (Fission yeast).